Here is a 111-residue protein sequence, read N- to C-terminus: Microtubule nucleation factor SSNA1 (111 aa).

The stretch at 6 to 71 (QALQNHNNEL…ARKTETKNEY (66 aa)) forms a coiled coil.

The protein belongs to the SSNA1 family. As to quaternary structure, self-assembles into fibrils in a head-to-tail fashion.

It localises to the cytoplasm. The protein localises to the cytoskeleton. Its subcellular location is the flagellum basal body. It is found in the flagellum axoneme. Its function is as follows. Microtubule-binding protein which stabilizes dynamic microtubules by slowing growth and shrinkage at both plus and minus ends and serves as a sensor of microtubule damage. Induces microtubule branching which is mediated by the formation of long SSNA1 fibrils which guide microtubule protofilaments to split apart from the mother microtubule and form daughter microtubules. Required for cell division. In Chlamydomonas reinhardtii (Chlamydomonas smithii), this protein is Microtubule nucleation factor SSNA1.